A 141-amino-acid polypeptide reads, in one-letter code: Hemoglobin subunit alpha (141 aa).

The 141-residue stretch at 1–141 folds into the Globin domain; that stretch reads VLSPADKTNV…VSTVLTSKYR (141 aa). S3 is subject to Phosphoserine. N6-succinyllysine is present on K7. T8 carries the phosphothreonine modification. K11 carries the N6-succinyllysine modification. The residue at position 16 (K16) is an N6-acetyllysine; alternate. An N6-succinyllysine; alternate modification is found at K16. At Y24 the chain carries Phosphotyrosine. K40 is modified (N6-succinyllysine). Residue S49 is modified to Phosphoserine. H58 lines the O2 pocket. H87 is a heme b binding site. S102 carries the phosphoserine modification. Residue T108 is modified to Phosphothreonine. S124 carries the phosphoserine modification. Phosphothreonine is present on residues T134 and T137. At S138 the chain carries Phosphoserine.

The protein belongs to the globin family. In terms of assembly, heterotetramer of two alpha chains and two beta chains. As to expression, red blood cells.

In terms of biological role, involved in oxygen transport from the lung to the various peripheral tissues. Functionally, hemopressin acts as an antagonist peptide of the cannabinoid receptor CNR1. Hemopressin-binding efficiently blocks cannabinoid receptor CNR1 and subsequent signaling. The protein is Hemoglobin subunit alpha (HBA) of Phoca vitulina (Harbor seal).